The chain runs to 556 residues: Mitochondrial distribution and morphology protein 34-2 (556 aa).

The SMP-LTD domain maps to 1 to 195 (MAFNFNWSPL…LPAIIHRLSL (195 aa)). Disordered stretches follow at residues 206–239 (EEMN…DSLG), 299–423 (TDTS…PVTP), and 440–473 (HLPS…DATP). Over residues 299 to 333 (TDTSEFPSSVISPLSPTLSREQSQMGSMSSLHETA) the composition is skewed to polar residues. Low complexity predominate over residues 334–357 (SNASMQSRPSMSSHSFSTSTYGLS). The span at 362–374 (RHSKAHARKRKKR) shows a compositional bias: basic residues. Over residues 375–385 (VVDLRRPKTTD) the composition is skewed to basic and acidic residues. Residues 391–402 (SDESVMTESSRP) are compositionally biased toward polar residues. The segment covering 459-468 (ETIRGPKAED) has biased composition (basic and acidic residues).

It belongs to the MDM34 family. Component of the ER-mitochondria encounter structure (ERMES) or MDM complex, composed of mmm1, mdm10, mdm12 and mdm34.

It is found in the mitochondrion outer membrane. Functionally, component of the ERMES/MDM complex, which serves as a molecular tether to connect the endoplasmic reticulum (ER) and mitochondria. Components of this complex are involved in the control of mitochondrial shape and protein biogenesis, and function in nonvesicular lipid trafficking between the ER and mitochondria. Mdm34 is required for the interaction of the ER-resident membrane protein mmm1 and the outer mitochondrial membrane-resident beta-barrel protein mdm10. The polypeptide is Mitochondrial distribution and morphology protein 34-2 (Penicillium rubens (strain ATCC 28089 / DSM 1075 / NRRL 1951 / Wisconsin 54-1255) (Penicillium chrysogenum)).